Consider the following 430-residue polypeptide: Adenylosuccinate synthetase (430 aa).

Residues G12–K18 and G40–T42 contribute to the GTP site. The active-site Proton acceptor is the D13. 2 residues coordinate Mg(2+): D13 and G40. IMP-binding positions include D13–K16, N38–H41, T128, R142, Q223, T238, and R302. H41 serves as the catalytic Proton donor. Residue T298–R304 coordinates substrate. GTP is bound by residues R304, S330–D332, and S412–G414.

The protein belongs to the adenylosuccinate synthetase family. As to quaternary structure, homodimer. Mg(2+) is required as a cofactor.

Its subcellular location is the cytoplasm. It catalyses the reaction IMP + L-aspartate + GTP = N(6)-(1,2-dicarboxyethyl)-AMP + GDP + phosphate + 2 H(+). It functions in the pathway purine metabolism; AMP biosynthesis via de novo pathway; AMP from IMP: step 1/2. In terms of biological role, plays an important role in the de novo pathway of purine nucleotide biosynthesis. Catalyzes the first committed step in the biosynthesis of AMP from IMP. This is Adenylosuccinate synthetase from Streptococcus gordonii (strain Challis / ATCC 35105 / BCRC 15272 / CH1 / DL1 / V288).